The sequence spans 99 residues: Biogenesis of lysosome-related organelles complex 1 subunit SNN1 (99 aa).

A coiled-coil region spans residues 34-94; sequence SINELRESQA…VVLKRYEKMV (61 aa).

It belongs to the SNAPIN family. Component of the biogenesis of lysosome-related organelles complex-1 (BLOC-1).

The protein resides in the endosome. Its function is as follows. Component of the biogenesis of lysosome-related organelles complex-1 (BLOC-1), a complex involved in endosomal cargo sorting. This is Biogenesis of lysosome-related organelles complex 1 subunit SNN1 (SNN1) from Kluyveromyces lactis (strain ATCC 8585 / CBS 2359 / DSM 70799 / NBRC 1267 / NRRL Y-1140 / WM37) (Yeast).